Reading from the N-terminus, the 761-residue chain is Probable ubiquitin carboxyl-terminal hydrolase creB (761 aa).

Positions 1–45 (MGSFLRSFRHNGGSTAPSVGAVPAKKEPQPPPMTPLEKRLLDMGP) are disordered. The segment covering 36-45 (LEKRLLDMGP) has biased composition (basic and acidic residues). In terms of domain architecture, USP spans 55–468 (YGMENYGNTC…CAYVLFYQET (414 aa)). Cysteine 64 (nucleophile) is an active-site residue. Disordered stretches follow at residues 113–146 (EAEAQAEKQKAANAQRPGMPPNPQQKPEDKDSPE) and 242–269 (PLMEKSLPAPETADSVDQSSSTGSKTPN). The segment covering 256-269 (SVDQSSSTGSKTPN) has biased composition (polar residues). Histidine 419 acts as the Proton acceptor in catalysis. Residues 496–761 (LKQNGFPQSP…LRKKSFSILS (266 aa)) form a disordered region. A compositionally biased stretch (pro residues) spans 555–566 (PLSPVPPVPPIP). The stretch at 577–640 (KNDALAKREE…ASKAEEDRRL (64 aa)) forms a coiled coil. The segment covering 580–649 (ALAKREEKER…LSTENGKEKQ (70 aa)) has biased composition (basic and acidic residues). Over residues 655-666 (RLKRGSKSLSHR) the composition is skewed to basic residues. The segment covering 692 to 710 (SQSGPTSEQQQQQRQQSPP) has biased composition (low complexity). Pro residues predominate over residues 712–722 (HDQPPNSPQPG). Residues 725–743 (TIREDEQVNHKDSKHERTG) are compositionally biased toward basic and acidic residues. Over residues 744-761 (HGKWRSFSLRKKSFSILS) the composition is skewed to basic residues.

Belongs to the peptidase C19 family. Interacts with creA, creC and qutD.

It catalyses the reaction Thiol-dependent hydrolysis of ester, thioester, amide, peptide and isopeptide bonds formed by the C-terminal Gly of ubiquitin (a 76-residue protein attached to proteins as an intracellular targeting signal).. Ubiquitin thioesterase component of the regulatory network controlling carbon source utilization through ubiquitination and deubiquitination involving creA, creB, creC, creD and acrB. Deubiquitinates the creA catabolic repressor and the quinate permease qutD. Also plays a role in response to carbon starvation and the control of extracellular proteases activity. The protein is Probable ubiquitin carboxyl-terminal hydrolase creB (creB) of Neosartorya fischeri (strain ATCC 1020 / DSM 3700 / CBS 544.65 / FGSC A1164 / JCM 1740 / NRRL 181 / WB 181) (Aspergillus fischerianus).